The chain runs to 221 residues: Probable GTP-binding protein EngB (221 aa).

The EngB-type G domain maps to Gly32 to Thr205. GTP contacts are provided by residues Gly40–Ser47, Gly67–Leu71, Asp85–Gly88, Thr152–Asp155, and Val184–Asn186. Residues Ser47 and Thr69 each contribute to the Mg(2+) site.

This sequence belongs to the TRAFAC class TrmE-Era-EngA-EngB-Septin-like GTPase superfamily. EngB GTPase family. Requires Mg(2+) as cofactor.

Functionally, necessary for normal cell division and for the maintenance of normal septation. The protein is Probable GTP-binding protein EngB of Leptospira borgpetersenii serovar Hardjo-bovis (strain JB197).